A 1044-amino-acid chain; its full sequence is Isoleucine--tRNA ligase (1044 aa).

A 'HIGH' region motif is present at residues 48-58; it reads PFATGLPHFGH. Positions 594–598 match the 'KMSKS' region motif; it reads KMSKS. Residue Lys-597 coordinates ATP.

Belongs to the class-I aminoacyl-tRNA synthetase family. IleS type 2 subfamily. Monomer. Zn(2+) serves as cofactor.

It localises to the cytoplasm. It carries out the reaction tRNA(Ile) + L-isoleucine + ATP = L-isoleucyl-tRNA(Ile) + AMP + diphosphate. Catalyzes the attachment of isoleucine to tRNA(Ile). As IleRS can inadvertently accommodate and process structurally similar amino acids such as valine, to avoid such errors it has two additional distinct tRNA(Ile)-dependent editing activities. One activity is designated as 'pretransfer' editing and involves the hydrolysis of activated Val-AMP. The other activity is designated 'posttransfer' editing and involves deacylation of mischarged Val-tRNA(Ile). The chain is Isoleucine--tRNA ligase from Borrelia hermsii (strain HS1 / DAH).